We begin with the raw amino-acid sequence, 938 residues long: Translation initiation factor IF-2 (938 aa).

Residues 55–322 (KAEASAAPAA…RKSKRARRQE (268 aa)) are disordered. Low complexity-rich tracts occupy residues 57–68 (EASAAPAAPAEK) and 77–117 (KKAA…AAAP). Residues 118 to 136 (KPGPKPAPVAEQPAPPAEP) show a composition bias toward pro residues. 3 stretches are compositionally biased toward low complexity: residues 141–153 (APEA…APAA), 180–198 (GMGR…AGDN), and 224–233 (MMPKSPSAFG). Residues 247–293 (PGRGGAPGRGGAPGRGGVGTGAPGRGGAPGGGFGPSGGGRPGGGRPG) show a composition bias toward gly residues. Positions 310–319 (RRGRKSKRAR) are enriched in basic residues. The tr-type G domain maps to 431–603 (ARPPVVTVMG…VVLTADASLD (173 aa)). The tract at residues 440–447 (GHVDHGKT) is G1. 440–447 (GHVDHGKT) provides a ligand contact to GTP. The G2 stretch occupies residues 465-469 (GITQH). A G3 region spans residues 490 to 493 (DTPG). GTP-binding positions include 490-494 (DTPGH) and 544-547 (NKID). The interval 544–547 (NKID) is G4. Residues 580–582 (SAK) are G5.

It belongs to the TRAFAC class translation factor GTPase superfamily. Classic translation factor GTPase family. IF-2 subfamily.

Its subcellular location is the cytoplasm. Its function is as follows. One of the essential components for the initiation of protein synthesis. Protects formylmethionyl-tRNA from spontaneous hydrolysis and promotes its binding to the 30S ribosomal subunits. Also involved in the hydrolysis of GTP during the formation of the 70S ribosomal complex. This Nocardioides sp. (strain ATCC BAA-499 / JS614) protein is Translation initiation factor IF-2.